A 230-amino-acid polypeptide reads, in one-letter code: Large ribosomal subunit protein uL1 (230 aa).

This sequence belongs to the universal ribosomal protein uL1 family. As to quaternary structure, part of the 50S ribosomal subunit.

In terms of biological role, binds directly to 23S rRNA. The L1 stalk is quite mobile in the ribosome, and is involved in E site tRNA release. Functionally, protein L1 is also a translational repressor protein, it controls the translation of the L11 operon by binding to its mRNA. The chain is Large ribosomal subunit protein uL1 from Nitrobacter winogradskyi (strain ATCC 25391 / DSM 10237 / CIP 104748 / NCIMB 11846 / Nb-255).